We begin with the raw amino-acid sequence, 240 residues long: Biosynthetic peptidoglycan transglycosylase (240 aa).

A helical membrane pass occupies residues 15 to 35 (WMVYLGAVVAIAWLATQAFYF).

Belongs to the glycosyltransferase 51 family.

The protein resides in the cell inner membrane. The catalysed reaction is [GlcNAc-(1-&gt;4)-Mur2Ac(oyl-L-Ala-gamma-D-Glu-L-Lys-D-Ala-D-Ala)](n)-di-trans,octa-cis-undecaprenyl diphosphate + beta-D-GlcNAc-(1-&gt;4)-Mur2Ac(oyl-L-Ala-gamma-D-Glu-L-Lys-D-Ala-D-Ala)-di-trans,octa-cis-undecaprenyl diphosphate = [GlcNAc-(1-&gt;4)-Mur2Ac(oyl-L-Ala-gamma-D-Glu-L-Lys-D-Ala-D-Ala)](n+1)-di-trans,octa-cis-undecaprenyl diphosphate + di-trans,octa-cis-undecaprenyl diphosphate + H(+). It participates in cell wall biogenesis; peptidoglycan biosynthesis. Its function is as follows. Peptidoglycan polymerase that catalyzes glycan chain elongation from lipid-linked precursors. The sequence is that of Biosynthetic peptidoglycan transglycosylase from Paraburkholderia phytofirmans (strain DSM 17436 / LMG 22146 / PsJN) (Burkholderia phytofirmans).